Consider the following 187-residue polypeptide: Elongation factor P (187 aa).

Belongs to the elongation factor P family.

The protein resides in the cytoplasm. It functions in the pathway protein biosynthesis; polypeptide chain elongation. Its function is as follows. Involved in peptide bond synthesis. Stimulates efficient translation and peptide-bond synthesis on native or reconstituted 70S ribosomes in vitro. Probably functions indirectly by altering the affinity of the ribosome for aminoacyl-tRNA, thus increasing their reactivity as acceptors for peptidyl transferase. The chain is Elongation factor P from Brachyspira hyodysenteriae (strain ATCC 49526 / WA1).